A 573-amino-acid chain; its full sequence is WRKY transcription factor SUSIBA2 (573 aa).

Disordered stretches follow at residues 56–133 (AHPD…CSRE) and 157–192 (PAEVGTSEPQQMNSSDNAMQEPQSENVADKSADDGY). The segment covering 64-85 (PRDKSVRNAHEDRGSRDFEFKP) has biased composition (basic and acidic residues). A compositionally biased stretch (low complexity) spans 108-122 (MQNQSMNPSSSSSNM). Residues 163 to 182 (SEPQQMNSSDNAMQEPQSEN) are compositionally biased toward polar residues. Positions 183–192 (VADKSADDGY) are enriched in basic and acidic residues. The WRKY 1 DNA-binding region spans 183 to 247 (VADKSADDGY…YKGRHNHPKP (65 aa)). Cysteine 214, cysteine 219, histidine 242, and histidine 244 together coordinate Zn(2+). A disordered region spans residues 240–332 (GRHNHPKPQP…EDLESKRRKM (93 aa)). Residues 263–277 (GEERYDGASAADDKS) are compositionally biased toward basic and acidic residues. Residues 357 to 422 (SEVDILDDGY…YEGKHNHEVP (66 aa)) constitute a DNA-binding region (WRKY 2). Residues cysteine 388, cysteine 393, histidine 417, and histidine 419 each coordinate Zn(2+).

It belongs to the WRKY group I family. Expressed in endosperm, but not in leaves.

Its subcellular location is the nucleus. Transcription factor involved in starch synthesis. Acts as a transcriptional activator in sugar signaling. Interacts specifically with the SURE and W-box elements, but not with the SP8a element. This chain is WRKY transcription factor SUSIBA2, found in Hordeum vulgare (Barley).